We begin with the raw amino-acid sequence, 382 residues long: Galactokinase (382 aa).

A substrate-binding site is contributed by 34–37 (EHTD). 124–130 (GAGLSSS) is an ATP binding site. Mg(2+) is bound by residues Ser130 and Glu162. Asp174 acts as the Proton acceptor in catalysis. A substrate-binding site is contributed by Tyr223.

Belongs to the GHMP kinase family. GalK subfamily.

The protein localises to the cytoplasm. It catalyses the reaction alpha-D-galactose + ATP = alpha-D-galactose 1-phosphate + ADP + H(+). It functions in the pathway carbohydrate metabolism; galactose metabolism. Functionally, catalyzes the transfer of the gamma-phosphate of ATP to D-galactose to form alpha-D-galactose-1-phosphate (Gal-1-P). The polypeptide is Galactokinase (Shigella boydii serotype 18 (strain CDC 3083-94 / BS512)).